The sequence spans 453 residues: UPF0210 protein Mbur_0828 (453 aa).

The protein belongs to the UPF0210 family.

The chain is UPF0210 protein Mbur_0828 from Methanococcoides burtonii (strain DSM 6242 / NBRC 107633 / OCM 468 / ACE-M).